We begin with the raw amino-acid sequence, 206 residues long: 2,3-bisphosphoglycerate-dependent phosphoglycerate mutase (206 aa).

Substrate contacts are provided by residues 9–16 (RHGQSEWN), 22–23 (TG), Arg-61, 88–91 (ERDY), Lys-99, 115–116 (RR), and 159–160 (GN). His-10 functions as the Tele-phosphohistidine intermediate in the catalytic mechanism. Glu-88 serves as the catalytic Proton donor/acceptor.

This sequence belongs to the phosphoglycerate mutase family. BPG-dependent PGAM subfamily. In terms of assembly, homodimer.

It carries out the reaction (2R)-2-phosphoglycerate = (2R)-3-phosphoglycerate. It functions in the pathway carbohydrate degradation; glycolysis; pyruvate from D-glyceraldehyde 3-phosphate: step 3/5. Functionally, catalyzes the interconversion of 2-phosphoglycerate and 3-phosphoglycerate. The polypeptide is 2,3-bisphosphoglycerate-dependent phosphoglycerate mutase (Brucella abortus (strain S19)).